The sequence spans 384 residues: NAD(P) transhydrogenase subunit alpha part 1 (384 aa).

Positions 126 to 136 are RQD loop; involved in interaction with PntB; it reads PRISRAQSMDI. NAD(+) contacts are provided by residues 127–129, 132–135, 180–182, 202–204, Gly234, Gln247, and Leu266; these read RIS, QSMD, VGV, and DVR.

It belongs to the AlaDH/PNT family. As to quaternary structure, heterotrimer of two alpha chains and a beta (PntB) chain; in Rhodospirillum, the alpha chain is made of two subunits (PntAA and PntAB) and forms a dimer.

The catalysed reaction is NAD(+) + NADPH + H(+)(in) = NADH + NADP(+) + H(+)(out). Functionally, the transhydrogenation between NADH and NADP is coupled to respiration and ATP hydrolysis and functions as a proton pump across the membrane. This chain is NAD(P) transhydrogenase subunit alpha part 1 (pntAA), found in Rhodospirillum rubrum (strain ATCC 11170 / ATH 1.1.1 / DSM 467 / LMG 4362 / NCIMB 8255 / S1).